A 75-amino-acid chain; its full sequence is Small ribosomal subunit protein bS18 (75 aa).

The protein belongs to the bacterial ribosomal protein bS18 family. Part of the 30S ribosomal subunit. Forms a tight heterodimer with protein bS6.

Functionally, binds as a heterodimer with protein bS6 to the central domain of the 16S rRNA, where it helps stabilize the platform of the 30S subunit. This is Small ribosomal subunit protein bS18 from Aliivibrio fischeri (strain ATCC 700601 / ES114) (Vibrio fischeri).